The sequence spans 427 residues: Glucose-1-phosphate adenylyltransferase (427 aa).

Residues Y112, G177, 192 to 193 (EK), and S210 each bind alpha-D-glucose 1-phosphate.

This sequence belongs to the bacterial/plant glucose-1-phosphate adenylyltransferase family. As to quaternary structure, homotetramer.

The catalysed reaction is alpha-D-glucose 1-phosphate + ATP + H(+) = ADP-alpha-D-glucose + diphosphate. Its pathway is glycan biosynthesis; glycogen biosynthesis. Involved in the biosynthesis of ADP-glucose, a building block required for the elongation reactions to produce glycogen. Catalyzes the reaction between ATP and alpha-D-glucose 1-phosphate (G1P) to produce pyrophosphate and ADP-Glc. The chain is Glucose-1-phosphate adenylyltransferase from Methylobacillus flagellatus (strain ATCC 51484 / DSM 6875 / VKM B-1610 / KT).